We begin with the raw amino-acid sequence, 231 residues long: Ribosyldihydronicotinamide dehydrogenase [quinone] (231 aa).

FAD-binding positions include H12 and 18-21 (FNGS). Phosphoserine is present on S80. 104 to 107 (LYWF) provides a ligand contact to FAD. Position 127–129 (127–129 (FDI)) interacts with substrate. Residues 148–151 (TTGG) and Y156 each bind FAD. Residues H174 and H178 each contribute to the Zn(2+) site. Residue E194 coordinates FAD. S197 is modified (phosphoserine). Residue R201 participates in FAD binding. C223 contacts Zn(2+).

This sequence belongs to the NAD(P)H dehydrogenase (quinone) family. As to quaternary structure, homodimer. The cofactor is Zn(2+). Requires FAD as cofactor.

It is found in the cytoplasm. It carries out the reaction 1-(beta-D-ribofuranosyl)-1,4-dihydronicotinamide + a quinone + H(+) = beta-nicotinamide D-riboside + a quinol. Inhibited by melatonin, resveratrol and 5-hydroxytryptamine. The enzyme apparently serves as a quinone reductase in connection with conjugation reactions of hydroquinones involved in detoxification pathways as well as in biosynthetic processes such as the vitamin K-dependent gamma-carboxylation of glutamate residues in prothrombin synthesis. The protein is Ribosyldihydronicotinamide dehydrogenase [quinone] (NQO2) of Homo sapiens (Human).